The following is a 701-amino-acid chain: Polyribonucleotide nucleotidyltransferase (701 aa).

Aspartate 485 and aspartate 491 together coordinate Mg(2+). Residues 552–611 (PKIFKTTVDPEKIRDIIGPGGKMINKIIAETNVKIDIEPDGRIFVAAPDDISGNRAISMI) form the KH domain. Positions 621–689 (GQFFLGKVTR…KLGRLSLSRK (69 aa)) constitute an S1 motif domain.

This sequence belongs to the polyribonucleotide nucleotidyltransferase family. Mg(2+) is required as a cofactor.

Its subcellular location is the cytoplasm. It carries out the reaction RNA(n+1) + phosphate = RNA(n) + a ribonucleoside 5'-diphosphate. Involved in mRNA degradation. Catalyzes the phosphorolysis of single-stranded polyribonucleotides processively in the 3'- to 5'-direction. In Caldicellulosiruptor bescii (strain ATCC BAA-1888 / DSM 6725 / KCTC 15123 / Z-1320) (Anaerocellum thermophilum), this protein is Polyribonucleotide nucleotidyltransferase.